The following is a 214-amino-acid chain: Probable transaldolase (214 aa).

The Schiff-base intermediate with substrate role is filled by K83.

The protein belongs to the transaldolase family. Type 3B subfamily.

The protein localises to the cytoplasm. The enzyme catalyses D-sedoheptulose 7-phosphate + D-glyceraldehyde 3-phosphate = D-erythrose 4-phosphate + beta-D-fructose 6-phosphate. It functions in the pathway carbohydrate degradation; pentose phosphate pathway; D-glyceraldehyde 3-phosphate and beta-D-fructose 6-phosphate from D-ribose 5-phosphate and D-xylulose 5-phosphate (non-oxidative stage): step 2/3. Functionally, transaldolase is important for the balance of metabolites in the pentose-phosphate pathway. This Geotalea daltonii (strain DSM 22248 / JCM 15807 / FRC-32) (Geobacter daltonii) protein is Probable transaldolase.